Here is a 589-residue protein sequence, read N- to C-terminus: Zinc finger protein 703 (589 aa).

Positions 102–315 are disordered; sequence SQIGKPDPPP…GTGHIAPVSP (214 aa). The segment covering 113–122 has biased composition (low complexity); the sequence is SKLGSLSSSS. The segment covering 137–148 has biased composition (basic and acidic residues); it reads SGEHQNLDDKSS. Positions 179–188 are enriched in polar residues; that stretch reads NGSSSSVTCT. Low complexity predominate over residues 196-206; it reads SPRASSPQQTS. The segment covering 214 to 230 has biased composition (polar residues); that stretch reads QSQSPLSQKTAHLQTTH. The span at 237–250 shows a compositional bias: low complexity; sequence GSDPGNDSSSSGSD. Basic and acidic residues predominate over residues 251–262; the sequence is RNGKKDSDHNKS. Residues 272 to 299 are compositionally biased toward low complexity; that stretch reads SSHARASVNSSSASSSSSPQPDSKTDSQ. The segment at 408–460 is required for interaction with Groucho and hdac2 plays an important role in repression of transcription; that stretch reads VHDPSSALKSGFPLMYPTHHLHSLHPSSLSSSATSSLSHPLYTYGFMLPNETL. The segment at 462–490 adopts a C2H2-type zinc-finger fold; sequence HACNWVSVGGPCDKRFATSEELLAHLRTH. A required for self-association and nuclear localization region spans residues 498–589; that stretch reads GKLLSGYPSS…LGSASALGYQ (92 aa).

This sequence belongs to the Elbow/Noc family. In terms of assembly, self-associates. Interacts with nlz2. May interact with Groucho corepressor proteins.

The protein localises to the nucleus. The protein resides in the cytoplasm. Its function is as follows. Transcriptional corepressor which does not bind directly to DNA and may regulate transcription through recruitment of histone deacetylases to gene promoters. Required for segmental gene expression during hindbrain development. May regulate cell adhesion, migration and proliferation. The protein is Zinc finger protein 703 (znf703) of Danio rerio (Zebrafish).